A 328-amino-acid chain; its full sequence is MKINLDRTSSGFCIGVQGTIHVAEEKLNNPDKLFSLGDVVHNEAEVNRLEHLGLTTIDESGFHELKNAQLLIRAHGEPPSTYRIAEKNNLVITDTTCPVVSRLQRTARLLHELGYQIIIYGKPSHPEVIGINGHCKNSAVIIKHPDLSDPSETGQIDLKRKTALISQTTMDVPGFYELKANIRNLFAADSEEIRNENDHLWMAIRDIDLTASLTGIRDMPRYVYKDTICRQVSSRNQMLHDFAIANSCVIFVAGKKSSNGQVLFGICKAANPCTYFIEDIDEIDDAWLTGSDGRTVESVGICGATSTPMWLLEKVAAHLQRRYNHDPA.

Residue cysteine 13 coordinates [4Fe-4S] cluster. 2 residues coordinate (2E)-4-hydroxy-3-methylbut-2-enyl diphosphate: histidine 41 and histidine 75. Dimethylallyl diphosphate-binding residues include histidine 41 and histidine 75. The isopentenyl diphosphate site is built by histidine 41 and histidine 75. Cysteine 97 is a binding site for [4Fe-4S] cluster. Histidine 125 serves as a coordination point for (2E)-4-hydroxy-3-methylbut-2-enyl diphosphate. Histidine 125 is a binding site for dimethylallyl diphosphate. Histidine 125 is a binding site for isopentenyl diphosphate. The active-site Proton donor is glutamate 127. Threonine 168 contributes to the (2E)-4-hydroxy-3-methylbut-2-enyl diphosphate binding site. [4Fe-4S] cluster is bound at residue cysteine 229. The (2E)-4-hydroxy-3-methylbut-2-enyl diphosphate site is built by serine 257, serine 258, asparagine 259, and serine 306. Residues serine 257, serine 258, asparagine 259, and serine 306 each contribute to the dimethylallyl diphosphate site. The isopentenyl diphosphate site is built by serine 257, serine 258, asparagine 259, and serine 306.

This sequence belongs to the IspH family. It depends on [4Fe-4S] cluster as a cofactor.

The enzyme catalyses isopentenyl diphosphate + 2 oxidized [2Fe-2S]-[ferredoxin] + H2O = (2E)-4-hydroxy-3-methylbut-2-enyl diphosphate + 2 reduced [2Fe-2S]-[ferredoxin] + 2 H(+). It carries out the reaction dimethylallyl diphosphate + 2 oxidized [2Fe-2S]-[ferredoxin] + H2O = (2E)-4-hydroxy-3-methylbut-2-enyl diphosphate + 2 reduced [2Fe-2S]-[ferredoxin] + 2 H(+). Its pathway is isoprenoid biosynthesis; dimethylallyl diphosphate biosynthesis; dimethylallyl diphosphate from (2E)-4-hydroxy-3-methylbutenyl diphosphate: step 1/1. It participates in isoprenoid biosynthesis; isopentenyl diphosphate biosynthesis via DXP pathway; isopentenyl diphosphate from 1-deoxy-D-xylulose 5-phosphate: step 6/6. Catalyzes the conversion of 1-hydroxy-2-methyl-2-(E)-butenyl 4-diphosphate (HMBPP) into a mixture of isopentenyl diphosphate (IPP) and dimethylallyl diphosphate (DMAPP). Acts in the terminal step of the DOXP/MEP pathway for isoprenoid precursor biosynthesis. The protein is 4-hydroxy-3-methylbut-2-enyl diphosphate reductase of Chlorobium phaeobacteroides (strain DSM 266 / SMG 266 / 2430).